A 521-amino-acid chain; its full sequence is Cyclic AMP-responsive element-binding protein 3-like protein 2 (521 aa).

Over 1 to 378 (MEVLESGEQS…CKLAGTQTGT (378 aa)) the chain is Cytoplasmic. A Phosphoserine modification is found at serine 93. Lysine 178 participates in a covalent cross-link: Glycyl lysine isopeptide (Lys-Gly) (interchain with G-Cter in SUMO2). Serine 191 is modified (phosphoserine). A disordered region spans residues 196-264 (SVDQLHLPPT…PHKLQGSGPL (69 aa)). Low complexity predominate over residues 208–220 (SSHSSDSEGSLSP). The bZIP domain occupies 294-357 (ALKKIRRKIK…RTLLQQLQKL (64 aa)). Positions 296–325 (KKIRRKIKNKISAQESRRKKKEYMDSLEKK) are basic motif. The segment at 336–357 (LRKKVEVLENTNRTLLQQLQKL) is leucine-zipper. A helical; Signal-anchor for type II membrane protein transmembrane segment spans residues 379–399 (CLMVVVLCFAVAFGSLFQGYG). The Lumenal portion of the chain corresponds to 400-521 (LYPSATKMAL…ELERRVNATF (122 aa)). Positions 427–430 (RNLL) match the S1P recognition motif. N-linked (GlcNAc...) asparagine glycans are attached at residues asparagine 505 and asparagine 518.

The protein belongs to the bZIP family. ATF subfamily. As to quaternary structure, binds DNA as a dimer. Upon ER stress, translocated to the Golgi apparatus, where it is processed by regulated intramembrane proteolysis (RIP) to release the cytosol-facing N-terminal transcription factor domain. The cleavage is performed sequentially by site-1 and site-2 proteases (S1P/MBTPS1 and S2P/MBTPS2). In terms of processing, N-glycosylated. Post-translationally, ubiquitinated by HRD1/SYVN1; undergoes 'Lys-48'-linked ubiquitination, followed by rapid proteasomal degradation under normal conditions. Upon ER stress, SYVN1 E3 ubiquitin-protein ligase dissociates from its substrate, ubiquitination does not occur and CREB3L2 is stabilized.

The protein resides in the endoplasmic reticulum membrane. It localises to the nucleus. Its function is as follows. Transcription factor involved in unfolded protein response (UPR). In the absence of endoplasmic reticulum (ER) stress, inserted into ER membranes, with N-terminal DNA-binding and transcription activation domains oriented toward the cytosolic face of the membrane. In response to ER stress, transported to the Golgi, where it is cleaved in a site-specific manner by resident proteases S1P/MBTPS1 and S2P/MBTPS2. The released N-terminal cytosolic domain is translocated to the nucleus to effect transcription of specific target genes. Plays a critical role in chondrogenesis by activating the transcription of SEC23A, which promotes the transport and secretion of cartilage matrix proteins, and possibly that of ER biogenesis-related genes. In a neuroblastoma cell line, protects cells from ER stress-induced death. In vitro activates transcription of target genes via direct binding to the CRE site. This is Cyclic AMP-responsive element-binding protein 3-like protein 2 (Creb3l2) from Rattus norvegicus (Rat).